Here is a 642-residue protein sequence, read N- to C-terminus: Threonine--tRNA ligase (642 aa).

One can recognise a TGS domain in the interval 1–63 (MSEIVVTLPD…TDDCELVIVT (63 aa)). A catalytic region spans residues 242–533 (DHRKLGQELD…LIEHFDGNFP (292 aa)). Residues Cys-334, His-385, and His-510 each contribute to the Zn(2+) site.

The protein belongs to the class-II aminoacyl-tRNA synthetase family. In terms of assembly, homodimer. It depends on Zn(2+) as a cofactor.

Its subcellular location is the cytoplasm. The catalysed reaction is tRNA(Thr) + L-threonine + ATP = L-threonyl-tRNA(Thr) + AMP + diphosphate + H(+). Its function is as follows. Catalyzes the attachment of threonine to tRNA(Thr) in a two-step reaction: L-threonine is first activated by ATP to form Thr-AMP and then transferred to the acceptor end of tRNA(Thr). This is Threonine--tRNA ligase from Natronomonas pharaonis (strain ATCC 35678 / DSM 2160 / CIP 103997 / JCM 8858 / NBRC 14720 / NCIMB 2260 / Gabara) (Halobacterium pharaonis).